The sequence spans 199 residues: Recombination protein RecR (199 aa).

The C4-type zinc-finger motif lies at 57 to 72 (CQSCRTFTEETYCPIC). Positions 81-176 (EVICVVETPA…TVSRIAHGVP (96 aa)) constitute a Toprim domain.

The protein belongs to the RecR family.

May play a role in DNA repair. It seems to be involved in an RecBC-independent recombinational process of DNA repair. It may act with RecF and RecO. The chain is Recombination protein RecR from Shewanella pealeana (strain ATCC 700345 / ANG-SQ1).